The chain runs to 306 residues: Ribosomal RNA small subunit methyltransferase H (306 aa).

S-adenosyl-L-methionine is bound by residues 33-35, D51, F78, D96, and Q103; that span reads GGY.

The protein belongs to the methyltransferase superfamily. RsmH family.

It localises to the cytoplasm. The catalysed reaction is cytidine(1402) in 16S rRNA + S-adenosyl-L-methionine = N(4)-methylcytidine(1402) in 16S rRNA + S-adenosyl-L-homocysteine + H(+). Functionally, specifically methylates the N4 position of cytidine in position 1402 (C1402) of 16S rRNA. This Rickettsia prowazekii (strain Madrid E) protein is Ribosomal RNA small subunit methyltransferase H.